We begin with the raw amino-acid sequence, 560 residues long: Cytosolic purine 5'-nucleotidase (560 aa).

Catalysis depends on D52, which acts as the Nucleophile. D52 and D54 together coordinate IMP. Mg(2+)-binding residues include D52 and D54. The Proton donor role is filled by D54. ATP is bound by residues R144 and N154. IMP is bound by residues R202, D206, K215, T249, N250, S251, and K292. D351 lines the Mg(2+) pocket. Residue S418 is modified to Phosphoserine. The ATP site is built by Q453 and R456. 3 positions are modified to phosphoserine: S502, S511, and S527. Residues 541–560 (PQEITHCHDEDDDEEEEEEE) form a disordered region. Residues 548–560 (HDEDDDEEEEEEE) are required for tetramer assembly. Positions 550-560 (EDDDEEEEEEE) are enriched in acidic residues.

Belongs to the 5'(3')-deoxyribonucleotidase family. Homotetramer. Mg(2+) is required as a cofactor.

It is found in the cytoplasm. The protein localises to the cytosol. The enzyme catalyses a ribonucleoside 5'-phosphate + H2O = a ribonucleoside + phosphate. It carries out the reaction a 2'-deoxyribonucleoside + a ribonucleoside 5'-phosphate = a ribonucleoside + a 2'-deoxyribonucleoside 5'-phosphate. The catalysed reaction is IMP + H2O = inosine + phosphate. It catalyses the reaction GMP + H2O = guanosine + phosphate. The enzyme catalyses dGMP + H2O = 2'-deoxyguanosine + phosphate. It carries out the reaction dIMP + H2O = 2'-deoxyinosine + phosphate. The catalysed reaction is XMP + H2O = xanthosine + phosphate. It catalyses the reaction inosine + GMP = guanosine + IMP. The enzyme catalyses dGMP + inosine = 2'-deoxyguanosine + IMP. It carries out the reaction dIMP + inosine = 2'-deoxyinosine + IMP. The catalysed reaction is inosine + UMP = uridine + IMP. It catalyses the reaction inosine + CMP = cytidine + IMP. The enzyme catalyses inosine + AMP = IMP + adenosine. Its activity is regulated as follows. Allosterically activated by various compounds including ATP, 2,3-BPG/2,3-Bisphosphoglyceric acid and Ap4A/P1,P4-bis(5'-adenosyl) tetraphosphate. Binding of an allosteric activator is a prerequisiste to magnesium and substrate binding. Inhibited by inorganic phosphate. Functionally, broad specificity cytosolic 5'-nucleotidase that catalyzes the dephosphorylation of 6-hydroxypurine nucleoside 5'-monophosphates. In addition, possesses a phosphotransferase activity by which it can transfer a phosphate from a donor nucleoside monophosphate to an acceptor nucleoside, preferably inosine, deoxyinosine and guanosine. Has the highest activities for IMP and GMP followed by dIMP, dGMP and XMP. Could also catalyze the transfer of phosphates from pyrimidine monophosphates but with lower efficiency. Through these activities regulates the purine nucleoside/nucleotide pools within the cell. This chain is Cytosolic purine 5'-nucleotidase, found in Mus musculus (Mouse).